Here is a 201-residue protein sequence, read N- to C-terminus: Orotate phosphoribosyltransferase (201 aa).

Position 113–121 (113–121 (EDIITTGKS)) interacts with 5-phospho-alpha-D-ribose 1-diphosphate. Orotate is bound by residues T117 and R145.

This sequence belongs to the purine/pyrimidine phosphoribosyltransferase family. PyrE subfamily. In terms of assembly, homodimer. Mg(2+) is required as a cofactor.

The enzyme catalyses orotidine 5'-phosphate + diphosphate = orotate + 5-phospho-alpha-D-ribose 1-diphosphate. It functions in the pathway pyrimidine metabolism; UMP biosynthesis via de novo pathway; UMP from orotate: step 1/2. Functionally, catalyzes the transfer of a ribosyl phosphate group from 5-phosphoribose 1-diphosphate to orotate, leading to the formation of orotidine monophosphate (OMP). The chain is Orotate phosphoribosyltransferase from Helicobacter pylori (strain HPAG1).